Reading from the N-terminus, the 160-residue chain is Aspartate 1-decarboxylase 2 (160 aa).

Ser25 functions as the Schiff-base intermediate with substrate; via pyruvic acid in the catalytic mechanism. Position 25 is a pyruvic acid (Ser) (Ser25). Thr57 contacts substrate. The active-site Proton donor is Tyr58. 73–75 (GAA) is a substrate binding site.

It belongs to the PanD family. Heterooctamer of four alpha and four beta subunits. Pyruvate serves as cofactor. Post-translationally, is synthesized initially as an inactive proenzyme, which is activated by self-cleavage at a specific serine bond to produce a beta-subunit with a hydroxyl group at its C-terminus and an alpha-subunit with a pyruvoyl group at its N-terminus.

The protein localises to the cytoplasm. The catalysed reaction is L-aspartate + H(+) = beta-alanine + CO2. Its pathway is cofactor biosynthesis; (R)-pantothenate biosynthesis; beta-alanine from L-aspartate: step 1/1. Catalyzes the pyruvoyl-dependent decarboxylation of aspartate to produce beta-alanine. This is Aspartate 1-decarboxylase 2 from Frankia casuarinae (strain DSM 45818 / CECT 9043 / HFP020203 / CcI3).